The chain runs to 2230 residues: MFKKLKQKISEEQQQLQQALAPAQASSNSSTPTRMRSRTSSFTEQLDEGTPNRESGDTQSFAQKLQLRVPSVESLFRSPIKESLFRSSSKESLVRTSSRESLNRLDLDSSTASFDPPSDMDSEAEDLVGNSDSLNKEQLIQRLRRMERSLSSYRGKYSELVTAYQMLQREKKKLQGILSQSQDKSLRRIAELREELQMDQQAKKHLQEEFDASLEEKDQYISVLQTQVSLLKQRLRNGPMNVDVLKPLPQLEPQAEVFTKEENPESDGEPVVEDGTSVKTLETLQQRVKRQENLLKRCKETIQSHKEQCTLLTSEKEALQEQLDERLQELEKIKDLHMAEKTKLITQLRDAKNLIEQLEQDKGMVIAETKRQMHETLEMKEEEIAQLRSRIKQMTTQGEELREQKEKSERAAFEELEKALSTAQKTEEARRKLKAEMDEQIKTIEKTSEEERISLQQELSRVKQEVVDVMKKSSEEQIAKLQKLHEKELARKEQELTKKLQTREREFQEQMKVALEKSQSEYLKISQEKEQQESLALEELELQKKAILTESENKLRDLQQEAETYRTRILELESSLEKSLQENKNQSKDLAVHLEAEKNKHNKEITVMVEKHKTELESLKHQQDALWTEKLQVLKQQYQTEMEKLREKCEQEKETLLKDKEIIFQAHIEEMNEKTLEKLDVKQTELESLSSELSEVLKARHKLEEELSVLKDQTDKMKQELEAKMDEQKNHHQQQVDSIIKEHEVSIQRTEKALKDQINQLELLLKERDKHLKEHQAHVENLEADIKRSEGELQQASAKLDVFQSYQSATHEQTKAYEEQLAQLQQKLLDLETERILLTKQVAEVEAQKKDVCTELDAHKIQVQDLMQQLEKQNSEMEQKVKSLTQVYESKLEDGNKEQEQTKQILVEKENMILQMREGQKKEIEILTQKLSAKEDSIHILNEEYETKFKNQEKKMEKVKQKAKEMQETLKKKLLDQEAKLKKELENTALELSQKEKQFNAKMLEMAQANSAGISDAVSRLETNQKEQIESLTEVHRRELNDVISIWEKKLNQQAEELQEIHEIQLQEKEQEVAELKQKILLFGCEKEEMNKEITWLKEEGVKQDTTLNELQEQLKQKSAHVNSLAQDETKLKAHLEKLEVDLNKSLKENTFLQEQLVELKMLAEEDKRKVSELTSKLKTTDEEFQSLKSSHEKSNKSLEDKSLEFKKLSEELAIQLDICCKKTEALLEAKTNELINISSSKTNAILSRISHCQHRTTKVKEALLIKTCTVSELEAQLRQLTEEQNTLNISFQQATHQLEEKENQIKSMKADIESLVTEKEALQKEGGNQQQAASEKESCITQLKKELSENINAVTLMKEELKEKKVEISSLSKQLTDLNVQLQNSISLSEKEAAISSLRKQYDEEKCELLDQVQDLSFKVDTLSKEKISALEQVDDWSNKFSEWKKKAQSRFTQHQNTVKELQIQLELKSKEAYEKDEQINLLKEELDQQNKRFDCLKGEMEDDKSKMEKKESNLETELKSQTARIMELEDHITQKTIEIESLNEVLKNYNQQKDIEHKELVQKLQHFQELGEEKDNRVKEAEEKILTLENQVYSMKAELETKKKELEHVNLSVKSKEEELKALEDRLESESAAKLAELKRKAEQKIAAIKKQLLSQMEEKEEQYKKGTESHLSELNTKLQEREREVHILEEKLKSVESSQSETLIVPRSAKNVAAYTEQEEADSQGCVQKTYEEKISVLQRNLTEKEKLLQRVGQEKEETVSSHFEMRCQYQERLIKLEHAEAKQHEDQSMIGHLQEELEEKNKKYSLIVAQHVEKEGGKNNIQAKQNLENVFDDVQKTLQEKELTCQILEQKIKELDSCLVRQKEVHRVEMEELTSKYEKLQALQQMDGRNKPTELLEENTEEKSKSHLVQPKLLSNMEAQHNDLEFKLAGAEREKQKLGKEIVRLQKDLRMLRKEHQQELEILKKEYDQEREEKIKQEQEDLELKHNSTLKQLMREFNTQLAQKEQELEMTIKETINKAQEVEAELLESHQEETNQLLKKIAEKDDDLKRTAKRYEEILDAREEEMTAKVRDLQTQLEELQKKYQQKLEQEENPGNDNVTIMELQTQLAQKTTLISDSKLKEQEFREQIHNLEDRLKKYEKNVYATTVGTPYKGGNLYHTDVSLFGEPTEFEYLRKVLFEYMMGRETKTMAKVITTVLKFPDDQTQKILEREDARLMFTSPRSGIF.

The disordered stretch occupies residues 1–64 (MFKKLKQKIS…SGDTQSFAQK (64 aa)). At serine 10 the chain carries Phosphoserine. Residues 12 to 41 (EQQQLQQALAPAQASSNSSTPTRMRSRTSS) are compositionally biased toward low complexity. Threonine 39 carries the phosphothreonine modification. 4 positions are modified to phosphoserine: serine 41, serine 71, serine 78, and serine 89. Positions 87–107 (SSSKESLVRTSSRESLNRLDL) are enriched in basic and acidic residues. The segment at 87-127 (SSSKESLVRTSSRESLNRLDLDSSTASFDPPSDMDSEAEDL) is disordered. The interval 133 to 203 (SLNKEQLIQR…EELQMDQQAK (71 aa)) is interaction with MACF1. Residues 133–2185 (SLNKEQLIQR…EYLRKVLFEY (2053 aa)) are a coiled coil. Residue serine 266 is modified to Phosphoserine. N-linked (GlcNAc...) asparagine glycans are attached at residues asparagine 585 and asparagine 1612. The GRIP domain maps to 2168 to 2215 (LFGEPTEFEYLRKVLFEYMMGRETKTMAKVITTVLKFPDDQTQKILER). Threonine 2223 bears the Phosphothreonine mark.

As to quaternary structure, homodimer. Interacts with RAB6A. Interacts with GTP-bound ARL1 and ARL3. Interacts with MACF1. Directly interacts with TBC1D23. Interacts with FAM91A1; this interaction may be mediated by TBC1D23.

The protein resides in the cytoplasm. It is found in the golgi apparatus membrane. The protein localises to the golgi apparatus. Its subcellular location is the trans-Golgi network membrane. Its function is as follows. Involved in vesicular trafficking at the Golgi apparatus level. May play a role in delivery of transport vesicles containing GPI-linked proteins from the trans-Golgi network through its interaction with MACF1. Involved in endosome-to-Golgi trafficking. The protein is Golgin subfamily A member 4 (GOLGA4) of Homo sapiens (Human).